The primary structure comprises 118 residues: uncharacterized protein (118 aa).

This sequence to E.coli YeaO.

This is an uncharacterized protein from Mycobacterium bovis (strain ATCC BAA-935 / AF2122/97).